The following is a 347-amino-acid chain: Trace amine-associated receptor 4 (347 aa).

The Extracellular portion of the chain corresponds to 1–37; it reads MNTPDPWSSPEVQFCFAAANSSCPRKARPALVVCAMY. The N-linked (GlcNAc...) asparagine glycan is linked to Asn-20. Disulfide bonds link Cys-23–Cys-187 and Cys-106–Cys-191. The helical transmembrane segment at 38–58 threads the bilayer; that stretch reads LIMIGAIVMTMLGNMAVIISI. The Cytoplasmic portion of the chain corresponds to 59–69; that stretch reads AHFKQLHSPTN. A helical membrane pass occupies residues 70–90; the sequence is FLILSMATTDFLLSCVVMPFS. At 91–110 the chain is on the extracellular side; it reads MIRSIESCWYFGDLFCKVHS. Residues 111-129 traverse the membrane as a helical segment; sequence CCDIMLCTTSIFHLCFISV. At 130-149 the chain is on the cytoplasmic side; that stretch reads DRHYAVCDPLHYVTQITTRV. A helical membrane pass occupies residues 150 to 170; that stretch reads VGVFLLISWSVPIFFAFGLVF. The Extracellular portion of the chain corresponds to 171–197; it reads SELNLIGAEDFVAAIDCTGLCVLIFNK. Residues 175–188 are extracellular Loop 2 (ECL2); the sequence is LIGAEDFVAAIDCT. Residues 198–218 traverse the membrane as a helical segment; sequence LWGVLASFIAFFLPGTVMVGI. At 219-260 the chain is on the cytoplasmic side; that stretch reads YIHIFTVAQKHARQIGTGPRTKQALSESKMKATSKKESKATK. The helical transmembrane segment at 261-281 threads the bilayer; sequence TLSIVMGVFVLCWLPFFVLTI. Topologically, residues 282 to 296 are extracellular; that stretch reads TDPFIDFTTPEDLYN. A helical membrane pass occupies residues 297–317; it reads VFLWLGYFNSTFNPIIYGMFY. Over 318–347 the chain is Cytoplasmic; the sequence is PWFRKALRMIVTGTIFRSDSSTSSLHPAHP.

Belongs to the G-protein coupled receptor 1 family. As to expression, specifically expressed in neurons of the olfactory epithelium, to discrete glomeruli predominantly localized to a confined bulb region. Present in the dorsal area of the main olfactory epithelium.

The protein resides in the cell membrane. Functionally, olfactory receptor specific for 2-phenylethylamine, a trace amine present at high concentration in the urine of carnivore species, playing a key role in fear and avoidance responses. 2-phenylethylamine acts as a kairomone in the chemical detection of carnivore odor and triggers fear in mice. This receptor is probably mediated by the G(s)-class of G-proteins which activate adenylate cyclase. The chain is Trace amine-associated receptor 4 from Mus musculus (Mouse).